A 237-amino-acid polypeptide reads, in one-letter code: 6-carboxyhexanoate--CoA ligase (237 aa).

It belongs to the BioW family. In terms of assembly, homodimer. It depends on Mg(2+) as a cofactor.

The enzyme catalyses heptanedioate + ATP + CoA = 6-carboxyhexanoyl-CoA + AMP + diphosphate. It participates in metabolic intermediate metabolism; pimeloyl-CoA biosynthesis; pimeloyl-CoA from pimelate: step 1/1. In terms of biological role, catalyzes the transformation of pimelate into pimeloyl-CoA with concomitant hydrolysis of ATP to AMP. In Methanocaldococcus jannaschii (strain ATCC 43067 / DSM 2661 / JAL-1 / JCM 10045 / NBRC 100440) (Methanococcus jannaschii), this protein is 6-carboxyhexanoate--CoA ligase.